We begin with the raw amino-acid sequence, 460 residues long: Cyclin-T1-2 (460 aa).

Disordered regions lie at residues 1–20 (MDEALNENASGSESDASSVA) and 285–345 (QPIS…QDHS). Over residues 314-324 (SDDHSVHDGSR) the composition is skewed to basic and acidic residues. A compositionally biased stretch (polar residues) spans 332-345 (NSESEAQKNLQDHS).

This sequence belongs to the cyclin family. Cyclin T subfamily.

The protein is Cyclin-T1-2 (CYCT1-2) of Arabidopsis thaliana (Mouse-ear cress).